The primary structure comprises 329 residues: Calponin-3 (329 aa).

Lys-23 is subject to N6-acetyllysine. Positions 26–130 (HQAEEDLRNW…TLVALAGLAK (105 aa)) constitute a Calponin-homology (CH) domain. Lys-158 bears the N6-methyllysine mark. 3 Calponin-like repeats span residues 164–189 (IGLQMGTNKCASQAGMTAYGTRRHLY), 204–229 (ISLQMGTNKGASQAGMLAPGTRRDIY), and 243–268 (ISLQMGTNKVASQKGMSVYGLGRQVY). The disordered stretch occupies residues 280–329 (VIHNGSQGTGTNGSEISDSDYQAEYPDEYHGEYQDDYPRDYQYGDQGIDY). The segment covering 306–318 (DEYHGEYQDDYPR) has biased composition (basic and acidic residues).

It belongs to the calponin family.

In terms of biological role, thin filament-associated protein that is implicated in the regulation and modulation of smooth muscle contraction. It is capable of binding to actin, calmodulin and tropomyosin. The interaction of calponin with actin inhibits the actomyosin Mg-ATPase activity. The chain is Calponin-3 (CNN3) from Bos taurus (Bovine).